Here is a 145-residue protein sequence, read N- to C-terminus: D-aminoacyl-tRNA deacylase (145 aa).

A Gly-cisPro motif, important for rejection of L-amino acids motif is present at residues Gly-137–Pro-138.

It belongs to the DTD family. As to quaternary structure, homodimer.

Its subcellular location is the cytoplasm. The catalysed reaction is glycyl-tRNA(Ala) + H2O = tRNA(Ala) + glycine + H(+). It carries out the reaction a D-aminoacyl-tRNA + H2O = a tRNA + a D-alpha-amino acid + H(+). An aminoacyl-tRNA editing enzyme that deacylates mischarged D-aminoacyl-tRNAs. Also deacylates mischarged glycyl-tRNA(Ala), protecting cells against glycine mischarging by AlaRS. Acts via tRNA-based rather than protein-based catalysis; rejects L-amino acids rather than detecting D-amino acids in the active site. By recycling D-aminoacyl-tRNA to D-amino acids and free tRNA molecules, this enzyme counteracts the toxicity associated with the formation of D-aminoacyl-tRNA entities in vivo and helps enforce protein L-homochirality. The chain is D-aminoacyl-tRNA deacylase from Pseudoalteromonas atlantica (strain T6c / ATCC BAA-1087).